An 852-amino-acid polypeptide reads, in one-letter code: Bifunctional uridylyltransferase/uridylyl-removing enzyme (852 aa).

Residues 1 to 318 (MPANLSSALE…STPLRVTLRI (318 aa)) are uridylyltransferase. Residues 319-672 (DDDYIQVNNQ…SRILPKSDSF (354 aa)) are uridylyl-removing. The HD domain occupies 436 to 558 (VDDHILTVVR…VQTHERLSAL (123 aa)). ACT domains lie at 673 to 757 (QVMV…SRSR) and 785 to 852 (SVEI…EQLS).

It belongs to the GlnD family. It depends on Mg(2+) as a cofactor.

It catalyses the reaction [protein-PII]-L-tyrosine + UTP = [protein-PII]-uridylyl-L-tyrosine + diphosphate. The enzyme catalyses [protein-PII]-uridylyl-L-tyrosine + H2O = [protein-PII]-L-tyrosine + UMP + H(+). Its activity is regulated as follows. Uridylyltransferase (UTase) activity is inhibited by glutamine, while glutamine activates uridylyl-removing (UR) activity. Functionally, modifies, by uridylylation and deuridylylation, the PII regulatory proteins (GlnB and homologs), in response to the nitrogen status of the cell that GlnD senses through the glutamine level. Under low glutamine levels, catalyzes the conversion of the PII proteins and UTP to PII-UMP and PPi, while under higher glutamine levels, GlnD hydrolyzes PII-UMP to PII and UMP (deuridylylation). Thus, controls uridylylation state and activity of the PII proteins, and plays an important role in the regulation of nitrogen assimilation and metabolism. The protein is Bifunctional uridylyltransferase/uridylyl-removing enzyme of Neisseria meningitidis serogroup B (strain ATCC BAA-335 / MC58).